A 31-amino-acid chain; its full sequence is Cliotide T14 (31 aa).

The segment at residues 1–31 (DTIPCGESCVWIPCISSILGCSCKDKVCYHN) is a cross-link (cyclopeptide (Asp-Asn)). 3 disulfides stabilise this stretch: Cys-5–Cys-21, Cys-9–Cys-23, and Cys-14–Cys-28.

Contains 3 disulfide bonds. In terms of processing, this is a cyclic peptide. Expressed in seed but not in root nodules.

Its function is as follows. Probably participates in a plant defense mechanism. Not active against Gram-negative bacterium E.coli ATCC 700926 or Gram-positive bacterium S.aureus ATCC 12600 up to a concentration of 100 uM under low-salt conditions. The sequence is that of Cliotide T14 from Clitoria ternatea (Butterfly pea).